Reading from the N-terminus, the 523-residue chain is Cytochrome P450 monooxygenase ple5B (523 aa).

A helical transmembrane segment spans residues 16 to 33 (IAAAAAGSAVAVYKLLQL). 6 N-linked (GlcNAc...) asparagine glycosylation sites follow: Asn-82, Asn-103, Asn-122, Asn-295, Asn-379, and Asn-423. Residue Cys-446 participates in heme binding.

The protein belongs to the cytochrome P450 family. Requires heme as cofactor.

The protein resides in the membrane. It functions in the pathway secondary metabolite biosynthesis; terpenoid biosynthesis. Its function is as follows. Cytochrome P450 monooxygenase; part of the gene cluster that mediates the biosynthesis of pleuromutilin, a tricyclic diterpene showing antibacterial properties. The geranylgeranyl diphosphate (GGPP) synthase ple4 catalyzes the first step in pleuromutilin biosynthesis. GGPP is then substrate of the premutilin synthase (PS) ple3 to yield premutilin. Premutilin synthase is a bifunctional enzyme composed of the fusion of a class II diterpene cyclase (DTC) and a class I diterpene synthase (DTS), with the corresponding domains and active sites containing characteristic aspartate-rich motifs. GGPP is first converted to mutildienyl-diphosphate (MPP) at the class II DTC site. MPP is subsequently further cyclized at the class I DTS site, followed by a 1,5-hydride shift and addition of water prior to terminating deprotonation, to yield premutilin. The cytochrome P450 monooxygenases ple5 and ple6 hydroxylate premutilin at C-11 and C-3, respectively, producing 11-hydroxypremutilin and 3-hydroxypremutilin. The combination of the actions of both ple5 and ple6 leads to the production of 3,11-dihydroxypremutilin. The short chain dehydrogenase ple7 further converts 3,11-dihydroxypremutilin into mutilin. The acetyltransferase ple2 then acetylates mutilin to produce 14-O-acetylmutilin. Finally, the cytochrome P450 monooxygenase ple1 catalyzes hydroxylation on the alpha position of the acetyl side chain of 14-O-acetylmutilin to yield pleuromutilin. The protein is Cytochrome P450 monooxygenase ple5B of Rhodocybe pseudopiperita (Clitopilus pseudopiperitus).